Reading from the N-terminus, the 172-residue chain is Large ribosomal subunit protein uL10 (172 aa).

Belongs to the universal ribosomal protein uL10 family. Part of the ribosomal stalk of the 50S ribosomal subunit. The N-terminus interacts with L11 and the large rRNA to form the base of the stalk. The C-terminus forms an elongated spine to which L12 dimers bind in a sequential fashion forming a multimeric L10(L12)X complex.

Functionally, forms part of the ribosomal stalk, playing a central role in the interaction of the ribosome with GTP-bound translation factors. This chain is Large ribosomal subunit protein uL10 (rplJ), found in Caulobacter vibrioides (strain ATCC 19089 / CIP 103742 / CB 15) (Caulobacter crescentus).